Reading from the N-terminus, the 221-residue chain is Ras-related protein Rab-28 (221 aa).

Serine 2 carries the N-acetylserine modification. Serine 8 bears the Phosphoserine mark. GTP-binding residues include glycine 21, glycine 24, lysine 25, threonine 26, serine 27, glycine 38, lysine 39, tyrosine 41, and threonine 44. Threonine 26 contributes to the Mg(2+) binding site. The switch I stretch occupies residues 35–49; the sequence is ETFGKQYKQTIGLDF. 2 residues coordinate Mg(2+): threonine 44 and aspartate 68. Residues 68 to 85 form a switch II region; the sequence is DIGGQTIGGKMLDKYIYG. GTP-binding residues include glycine 71, asparagine 129, lysine 130, aspartate 132, alanine 160, and lysine 161. The residue at position 218 (cysteine 218) is a Cysteine methyl ester. Residue cysteine 218 is the site of S-farnesyl cysteine attachment. Residues 219 to 221 constitute a propeptide, removed in mature form; it reads AVQ.

It belongs to the small GTPase superfamily. Rab family. Interacts (prenylated form) with PDE6D; the interaction promotes RAB28 delivery to the photoreceptor outer segments. Interacts with KCNJ13; the interaction may facilitate cone outer segments phagocytosis. Interacts with RELA; the interaction contributes to RELA transport from cytoplasm to nucleus. The cofactor is Mg(2+). Post-translationally, isoprenylated.

The protein resides in the cell membrane. Its subcellular location is the cytoplasm. The protein localises to the cytoskeleton. It is found in the cilium basal body. It localises to the nucleus. The enzyme catalyses GTP + H2O = GDP + phosphate + H(+). Regulated by guanine nucleotide exchange factors (GEFs) which promote the exchange of bound GDP for free GTP. Regulated by GTPase activating proteins (GAPs) which increase the GTP hydrolysis activity. Inhibited by GDP dissociation inhibitors (GDIs). Its function is as follows. The small GTPases Rab are key regulators of intracellular membrane trafficking, from the formation of transport vesicles to their fusion with membranes. Rabs cycle between an inactive GDP-bound form and an active GTP-bound form that is able to recruit to membranes different sets of downstream effectors directly responsible for vesicle formation, movement, tethering and fusion. RAB28 is required for shedding and phagocytosis of cone cell outer segments (OS) discs in the retina. Also participates in nuclear factor kappa-B p65/RELA nuclear transport in endothelial cells. This Bos taurus (Bovine) protein is Ras-related protein Rab-28 (RAB28).